We begin with the raw amino-acid sequence, 462 residues long: L-seryl-tRNA(Sec) selenium transferase (462 aa).

Lys294 is modified (N6-(pyridoxal phosphate)lysine).

This sequence belongs to the SelA family. As to quaternary structure, homodecamer; pentamer of dimers. Binds only one seryl-tRNA(Sec) per dimer. It depends on pyridoxal 5'-phosphate as a cofactor.

The protein resides in the cytoplasm. It carries out the reaction L-seryl-tRNA(Sec) + selenophosphate + H(+) = L-selenocysteinyl-tRNA(Sec) + phosphate. It functions in the pathway aminoacyl-tRNA biosynthesis; selenocysteinyl-tRNA(Sec) biosynthesis; selenocysteinyl-tRNA(Sec) from L-seryl-tRNA(Sec) (bacterial route): step 1/1. Its function is as follows. Converts seryl-tRNA(Sec) to selenocysteinyl-tRNA(Sec) required for selenoprotein biosynthesis. In Yersinia pseudotuberculosis serotype O:1b (strain IP 31758), this protein is L-seryl-tRNA(Sec) selenium transferase.